A 156-amino-acid polypeptide reads, in one-letter code: Ribosomal RNA large subunit methyltransferase H (156 aa).

S-adenosyl-L-methionine is bound by residues L74, G105, and 124 to 129; that span reads LSKLTL.

The protein belongs to the RNA methyltransferase RlmH family. In terms of assembly, homodimer.

Its subcellular location is the cytoplasm. It carries out the reaction pseudouridine(1915) in 23S rRNA + S-adenosyl-L-methionine = N(3)-methylpseudouridine(1915) in 23S rRNA + S-adenosyl-L-homocysteine + H(+). Specifically methylates the pseudouridine at position 1915 (m3Psi1915) in 23S rRNA. In Legionella pneumophila (strain Paris), this protein is Ribosomal RNA large subunit methyltransferase H.